We begin with the raw amino-acid sequence, 594 residues long: UvrABC system protein C (594 aa).

The region spanning 14-91 is the GIY-YIG domain; it reads DQPGCYLMKD…IKKHDPKYNI (78 aa). In terms of domain architecture, UVR spans 196–231; it reads KEVRSELETKMYEASEKLEFERAKELRDQIAHIDAI.

Belongs to the UvrC family. In terms of assembly, interacts with UvrB in an incision complex.

The protein localises to the cytoplasm. In terms of biological role, the UvrABC repair system catalyzes the recognition and processing of DNA lesions. UvrC both incises the 5' and 3' sides of the lesion. The N-terminal half is responsible for the 3' incision and the C-terminal half is responsible for the 5' incision. This is UvrABC system protein C from Bacillus cereus (strain AH187).